Reading from the N-terminus, the 592-residue chain is Sodium- and chloride-dependent transporter XTRP3A (592 aa).

Topologically, residues methionine 1–glutamine 7 are cytoplasmic. A helical transmembrane segment spans residues tryptophan 8 to valine 28. At tryptophan 29 to serine 42 the chain is on the extracellular side. A helical transmembrane segment spans residues phenylalanine 43–leucine 63. The Cytoplasmic segment spans residues alanine 64–threonine 79. The chain crosses the membrane as a helical span at residues isoleucine 80 to methionine 100. The Extracellular portion of the chain corresponds to tyrosine 101–glycine 165. Residue asparagine 131 is glycosylated (N-linked (GlcNAc...) asparagine). Residues valine 166–leucine 186 form a helical membrane-spanning segment. Residues arginine 187–lysine 194 are Cytoplasmic-facing. The helical transmembrane segment at valine 195–leucine 215 threads the bilayer. The Extracellular segment spans residues threonine 216 to tryptophan 241. A helical transmembrane segment spans residues isoleucine 242 to phenylalanine 262. Residues alanine 263 to alanine 276 lie on the Cytoplasmic side of the membrane. Residues isoleucine 277–isoleucine 297 traverse the membrane as a helical segment. Residues tyrosine 298–glutamine 389 are Extracellular-facing. Residues leucine 390–asparagine 410 form a helical membrane-spanning segment. At threonine 411–glutamate 431 the chain is on the cytoplasmic side. The helical transmembrane segment at alanine 432–alanine 452 threads the bilayer. The Extracellular portion of the chain corresponds to glycine 453–alanine 465. Residues threonine 466 to leucine 486 traverse the membrane as a helical segment. At lysine 487–tyrosine 504 the chain is on the cytoplasmic side. Residues tryptophan 505–leucine 525 form a helical membrane-spanning segment. The Extracellular segment spans residues serine 526–histidine 554. Residues alanine 555–leucine 575 form a helical membrane-spanning segment. Residues glycine 576–alanine 592 are Cytoplasmic-facing.

This sequence belongs to the sodium:neurotransmitter symporter (SNF) (TC 2.A.22) family. SLC6A20 subfamily. As to expression, expressed in brain, kidney, small intestine, thymus, spleen and lung. In the brain, expressed in cerebellum, cortex and brain stem. Not detected in liver, muscle or heart. In brain, widespread in various regions, including the meninges, choroid plexus, cortex, hippocampus and thalamus.

The protein resides in the apical cell membrane. It catalyses the reaction L-proline(out) + chloride(out) + 2 Na(+)(out) = L-proline(in) + chloride(in) + 2 Na(+)(in). The enzyme catalyses 4-hydroxy-L-proline(out) + chloride(out) + 2 Na(+)(out) = 4-hydroxy-L-proline(in) + chloride(in) + 2 Na(+)(in). The catalysed reaction is 2-methyl-2-(methylamino)propanoate(out) + chloride(out) + 2 Na(+)(out) = 2-methyl-2-(methylamino)propanoate(in) + chloride(in) + 2 Na(+)(in). It carries out the reaction L-pipecolate(out) + chloride(out) + 2 Na(+)(out) = L-pipecolate(in) + chloride(in) + 2 Na(+)(in). It catalyses the reaction glycine betaine(out) + chloride(out) + 2 Na(+)(out) = glycine betaine(in) + chloride(in) + 2 Na(+)(in). The enzyme catalyses glycine(out) + chloride(out) + 2 Na(+)(out) = glycine(in) + chloride(in) + 2 Na(+)(in). Its function is as follows. Mediates the Na(+)- and Cl(-)-dependent uptake of imino acids such as L-proline, N-methyl-L-proline and pipecolate as well as N-methylated amino acids. Also transports glycine, regulates proline and glycine homeostasis in the brain playing a role in the modulation of NMDAR currents. The sequence is that of Sodium- and chloride-dependent transporter XTRP3A from Mus musculus (Mouse).